The primary structure comprises 349 residues: NAC domain-containing protein JA2 (349 aa).

The region spanning 14 to 163 (LPPGFRFYPT…EWVLCRIYKK (150 aa)) is the NAC domain. A DNA-binding region spans residues 111 to 169 (VGIKKALVFYVGKAPKGSKTNWIMHEYRLFESSRKNNGSSKLDEWVLCRIYKKNSSGPK). Positions 169–194 (KPLMSGLHSSNEYSHGSSTSSSSQFD) are disordered. Positions 177–191 (SSNEYSHGSSTSSSS) are enriched in low complexity.

In terms of tissue distribution, expressed in guard cells of the epidermis.

The protein resides in the nucleus. In terms of biological role, transcription factor involved in abscisic acid-mediated stomatal closure. Regulates the expression of NCED1, a gene involved in the biosynthesis of abscisic acid (ABA). Required for the stomatal closure induced by the bacterial pathogen Pseudomonas syringae pv tomato DC3000, but not for stomatal reopening. The chain is NAC domain-containing protein JA2 from Solanum lycopersicum (Tomato).